A 599-amino-acid polypeptide reads, in one-letter code: Elongation factor 4 (599 aa).

One can recognise a tr-type G domain in the interval 2–184 (KHIRNFSIIA…RLVRDIPPPE (183 aa)). GTP contacts are provided by residues 14–19 (DHGKST) and 131–134 (NKID).

Belongs to the TRAFAC class translation factor GTPase superfamily. Classic translation factor GTPase family. LepA subfamily.

The protein resides in the cell inner membrane. The catalysed reaction is GTP + H2O = GDP + phosphate + H(+). Required for accurate and efficient protein synthesis under certain stress conditions. May act as a fidelity factor of the translation reaction, by catalyzing a one-codon backward translocation of tRNAs on improperly translocated ribosomes. Back-translocation proceeds from a post-translocation (POST) complex to a pre-translocation (PRE) complex, thus giving elongation factor G a second chance to translocate the tRNAs correctly. Binds to ribosomes in a GTP-dependent manner. The polypeptide is Elongation factor 4 (Erwinia tasmaniensis (strain DSM 17950 / CFBP 7177 / CIP 109463 / NCPPB 4357 / Et1/99)).